The following is a 386-amino-acid chain: MATTKSFLILFFMILATTSSTCAKLEEMVTVLSIDGGGIKGIIPAIILEFLEGQLQEVDNNKDARLADYFDVIGGTSTGGLLTAMITTPNENNRPFAAAKDIVPFYFEHGPHIFNYSGSIIGPMYDGKYLLQVLQEKLGETRVHQALTEVAISSFDIKTNKPVIFTKSNLAKSPELDAKMYDICYSTAAAPIYFPPHYFITHTSNGDIYEFNLVDGGVATVGDPALLSLSVATRLAQEDPAFSSIKSLDYKQMLLLSLGTGTNSEFDKTYTAQEAAKWGPLRWMLAIQQMTNAASSYMTDYYISTVFQARHSQNNYLRVQENALTGTTTEMDDASEANMELLVQVGETLLKKPVSKDSPETYEEALKRFAKLLSDRKKLRANKASY.

The first 23 residues, 1–23, serve as a signal peptide directing secretion; it reads MATTKSFLILFFMILATTSSTCA. The PNPLA domain occupies 32–229; it reads LSIDGGGIKG…TVGDPALLSL (198 aa). The short motif at 36-41 is the GXGXXG element; the sequence is GGGIKG. A GXSXG motif is present at residues 75–79; that stretch reads GTSTG. Ser-77 serves as the catalytic Nucleophile. N-linked (GlcNAc...) asparagine glycosylation occurs at Asn-115. The active-site Proton acceptor is the Asp-215. The DGA/G motif lies at 215–217; that stretch reads DGG.

This sequence belongs to the patatin family. Tuber.

The protein resides in the vacuole. In terms of biological role, probable lipolytic acyl hydrolase (LAH), an activity which is thought to be involved in the response of tubers to pathogens. This is Patatin group M-1 from Solanum tuberosum (Potato).